The chain runs to 196 residues: Acyl-homoserine-lactone synthase (196 aa).

The protein belongs to the autoinducer synthase family.

The catalysed reaction is a fatty acyl-[ACP] + S-adenosyl-L-methionine = an N-acyl-L-homoserine lactone + S-methyl-5'-thioadenosine + holo-[ACP] + H(+). In terms of biological role, required for the synthesis of a yet unknown N-aceyl-homoserine lactone (N-aceyl-HSL), an autoinducer molecule which binds to PhzR and thus regulates phenazine production. This chain is Acyl-homoserine-lactone synthase (phzI), found in Pseudomonas chlororaphis (Pseudomonas aureofaciens).